A 347-amino-acid chain; its full sequence is GMP reductase (347 aa).

108–131 is an NADP(+) binding site; the sequence is ADFEKTVQILALNPALNFVCIDVA. K(+) contacts are provided by glycine 181 and glycine 183. Residue cysteine 186 is the Thioimidate intermediate of the active site. 216–239 serves as a coordination point for NADP(+); sequence IVSDGGCTMPGDVAKAFGGGADFV.

The protein belongs to the IMPDH/GMPR family. GuaC type 1 subfamily. In terms of assembly, homotetramer.

The catalysed reaction is IMP + NH4(+) + NADP(+) = GMP + NADPH + 2 H(+). In terms of biological role, catalyzes the irreversible NADPH-dependent deamination of GMP to IMP. It functions in the conversion of nucleobase, nucleoside and nucleotide derivatives of G to A nucleotides, and in maintaining the intracellular balance of A and G nucleotides. This is GMP reductase from Salmonella choleraesuis (strain SC-B67).